Here is a 197-residue protein sequence, read N- to C-terminus: Dephospho-CoA kinase (197 aa).

Residues 2–197 form the DPCK domain; that stretch reads IIGLTGGIGS…HTKYMELLNE (196 aa). 10-15 contributes to the ATP binding site; it reads GSGKSA.

This sequence belongs to the CoaE family.

Its subcellular location is the cytoplasm. The enzyme catalyses 3'-dephospho-CoA + ATP = ADP + CoA + H(+). It participates in cofactor biosynthesis; coenzyme A biosynthesis; CoA from (R)-pantothenate: step 5/5. Its function is as follows. Catalyzes the phosphorylation of the 3'-hydroxyl group of dephosphocoenzyme A to form coenzyme A. The chain is Dephospho-CoA kinase from Gamma-proteobacterium EBAC31A08.